The primary structure comprises 37 residues: Large ribosomal subunit protein bL36c (37 aa).

This sequence belongs to the bacterial ribosomal protein bL36 family.

It is found in the plastid. The protein resides in the chloroplast. This chain is Large ribosomal subunit protein bL36c, found in Dioscorea elephantipes (Elephant's foot yam).